Here is a 64-residue protein sequence, read N- to C-terminus: Beta-defensin 2 (64 aa).

A signal peptide spans 1–22 (MRLHHLLLVLFFVVLSAGSGFT). 3 disulfide bridges follow: C31/C60, C38/C53, and C43/C61.

This sequence belongs to the beta-defensin family.

The protein localises to the secreted. In terms of biological role, has bactericidal activity. This Ovis aries (Sheep) protein is Beta-defensin 2 (DEFB2).